Here is a 397-residue protein sequence, read N- to C-terminus: Multidrug efflux pump subunit AcrA (397 aa).

The signal sequence occupies residues 1-24 (MNKNRGFTPLAVVLMLSGSLALTG). Cys-25 carries N-palmitoyl cysteine lipidation. Cys-25 carries the S-diacylglycerol cysteine lipid modification. The stretch at 98 to 172 (PATYQATYDS…AVETARINLA (75 aa)) forms a coiled coil. The disordered stretch occupies residues 377-397 (EVTADNNQQAASGAQPEQSKS). The span at 379 to 397 (TADNNQQAASGAQPEQSKS) shows a compositional bias: polar residues.

It belongs to the membrane fusion protein (MFP) (TC 8.A.1) family. Monomeric in solution. Homotrimeric; interacts independently with AcrB and TolC as well as AcrZ. Part of the AcrA-AcrB-TolC efflux pump.

Its subcellular location is the cell inner membrane. Functionally, acrA-AcrB-AcrZ-TolC is a drug efflux protein complex with broad substrate specificity that uses the proton motive force to export substrates. This subunit may act as an adapter protein that links AcrB and TolC stably together. This is Multidrug efflux pump subunit AcrA (acrA) from Escherichia coli O157:H7.